The following is a 118-amino-acid chain: Large ribosomal subunit protein bL19 (118 aa).

The protein belongs to the bacterial ribosomal protein bL19 family.

Its function is as follows. This protein is located at the 30S-50S ribosomal subunit interface and may play a role in the structure and function of the aminoacyl-tRNA binding site. The protein is Large ribosomal subunit protein bL19 of Aliarcobacter butzleri (strain RM4018) (Arcobacter butzleri).